The following is a 249-amino-acid chain: 2,3-bisphosphoglycerate-dependent phosphoglycerate mutase (249 aa).

Substrate contacts are provided by residues 8 to 15, 21 to 22, Arg60, 87 to 90, Lys98, 114 to 115, and 183 to 184; these read RHGQSAWN, TG, ERHY, RR, and GN. The active-site Tele-phosphohistidine intermediate is His9. Glu87 acts as the Proton donor/acceptor in catalysis. Residues 115-137 are disordered; that stretch reads RSYDTPPPPLPADDPRSPAGDAR.

It belongs to the phosphoglycerate mutase family. BPG-dependent PGAM subfamily. Homodimer.

It catalyses the reaction (2R)-2-phosphoglycerate = (2R)-3-phosphoglycerate. Its pathway is carbohydrate degradation; glycolysis; pyruvate from D-glyceraldehyde 3-phosphate: step 3/5. In terms of biological role, catalyzes the interconversion of 2-phosphoglycerate and 3-phosphoglycerate. This is 2,3-bisphosphoglycerate-dependent phosphoglycerate mutase from Nitratidesulfovibrio vulgaris (strain DSM 19637 / Miyazaki F) (Desulfovibrio vulgaris).